The chain runs to 539 residues: CTP synthase (539 aa).

Residues Met-1 to Leu-267 are amidoligase domain. Ser-15 is a CTP binding site. Ser-15 serves as a coordination point for UTP. Residues Ser-16–Leu-21 and Asp-73 each bind ATP. Mg(2+) is bound by residues Asp-73 and Glu-141. Residues Asp-148–Glu-150, Lys-188–Gln-193, and Lys-224 contribute to the CTP site. Residues Lys-188–Gln-193 and Lys-224 contribute to the UTP site. One can recognise a Glutamine amidotransferase type-1 domain in the interval Thr-292–Lys-536. Residue Gly-359 coordinates L-glutamine. The Nucleophile; for glutamine hydrolysis role is filled by Cys-386. Residues Leu-387–Gln-390, Glu-410, and Arg-464 each bind L-glutamine. Residues His-509 and Glu-511 contribute to the active site.

This sequence belongs to the CTP synthase family. As to quaternary structure, homotetramer.

The enzyme catalyses UTP + L-glutamine + ATP + H2O = CTP + L-glutamate + ADP + phosphate + 2 H(+). It carries out the reaction L-glutamine + H2O = L-glutamate + NH4(+). It catalyses the reaction UTP + NH4(+) + ATP = CTP + ADP + phosphate + 2 H(+). It functions in the pathway pyrimidine metabolism; CTP biosynthesis via de novo pathway; CTP from UDP: step 2/2. Allosterically activated by GTP, when glutamine is the substrate; GTP has no effect on the reaction when ammonia is the substrate. The allosteric effector GTP functions by stabilizing the protein conformation that binds the tetrahedral intermediate(s) formed during glutamine hydrolysis. Inhibited by the product CTP, via allosteric rather than competitive inhibition. In terms of biological role, catalyzes the ATP-dependent amination of UTP to CTP with either L-glutamine or ammonia as the source of nitrogen. Regulates intracellular CTP levels through interactions with the four ribonucleotide triphosphates. This Wolbachia sp. subsp. Brugia malayi (strain TRS) protein is CTP synthase.